The primary structure comprises 463 residues: Abscisic acid 8'-hydroxylase 3 (463 aa).

A helical transmembrane segment spans residues 6–26; sequence LFLTLSAAALFLCLLRFIAGV. C411 serves as a coordination point for heme.

The protein belongs to the cytochrome P450 family. Requires heme as cofactor. Mainly expressed in flower buds, flowers, rosette leaves and roots. Lower expression in mature siliques and inflorescence stems. Not expressed in dry seeds.

Its subcellular location is the membrane. The enzyme catalyses 2-cis-(+)-abscisate + reduced [NADPH--hemoprotein reductase] + O2 = (+)-8'-hydroxyabscisate + oxidized [NADPH--hemoprotein reductase] + H2O + H(+). It participates in plant hormone degradation; abscisic acid degradation. Inhibited by tetcyclcis, but not by metyrapone. In terms of biological role, involved in the oxidative degradation of abscisic acid, but not in the isomerization of the produced 8'-hydroxyabscisic acid (8'-OH-ABA) to (-)-phaseic acid (PA). Involved in the control of postgermination growth. This Arabidopsis thaliana (Mouse-ear cress) protein is Abscisic acid 8'-hydroxylase 3 (CYP707A3).